We begin with the raw amino-acid sequence, 259 residues long: Cell division protein DivIB (259 aa).

Residues 1 to 27 lie on the Cytoplasmic side of the membrane; it reads MADGKVIDIEQKVPDFREQRRRKSRRR. Residues 28-45 form a helical membrane-spanning segment; that stretch reads LVLYISILAFFLLFVYYF. At 46-259 the chain is on the extracellular side; the sequence is QSDYSTVGHV…QEEEEIEIEE (214 aa). In terms of domain architecture, POTRA spans 50–118; it reads STVGHVDVYG…RSITLYVDEY (69 aa).

Belongs to the FtsQ/DivIB family. DivIB subfamily.

It is found in the cell membrane. In terms of biological role, cell division protein that may be involved in stabilizing or promoting the assembly of the division complex. In Bacillus selenitireducens (strain ATCC 700615 / DSM 15326 / MLS10), this protein is Cell division protein DivIB.